The following is a 178-amino-acid chain: Large ribosomal subunit protein bL25 (178 aa).

The protein belongs to the bacterial ribosomal protein bL25 family. CTC subfamily. As to quaternary structure, part of the 50S ribosomal subunit; part of the 5S rRNA/L5/L18/L25 subcomplex. Contacts the 5S rRNA. Binds to the 5S rRNA independently of L5 and L18.

Its function is as follows. This is one of the proteins that binds to the 5S RNA in the ribosome where it forms part of the central protuberance. This Sulfurimonas denitrificans (strain ATCC 33889 / DSM 1251) (Thiomicrospira denitrificans (strain ATCC 33889 / DSM 1251)) protein is Large ribosomal subunit protein bL25.